Consider the following 360-residue polypeptide: Photosystem II protein D1 1 (360 aa).

Helical transmembrane passes span 29–46, 118–133, and 142–156; these read YIGW…TATT, HFLI…QWEL, and WICV…AATA. Position 118 (H118) interacts with chlorophyll a. Residue Y126 participates in pheophytin a binding. [CaMn4O5] cluster-binding residues include D170 and E189. Residues 197 to 218 form a helical membrane-spanning segment; it reads FHMLGVAGVFGGALFAAMHGSL. H198 lines the chlorophyll a pocket. A quinone contacts are provided by residues H215 and 264–265; that span reads SF. Residue H215 participates in Fe cation binding. Fe cation is bound at residue H272. A helical membrane pass occupies residues 274-288; that stretch reads FLGAWPVVGIWFAAL. [CaMn4O5] cluster contacts are provided by H332, E333, D342, and A344. The propeptide occupies 345-360; it reads SGDAQMVALNAPAIEG.

This sequence belongs to the reaction center PufL/M/PsbA/D family. As to quaternary structure, PSII is composed of 1 copy each of membrane proteins PsbA, PsbB, PsbC, PsbD, PsbE, PsbF, PsbH, PsbI, PsbJ, PsbK, PsbL, PsbM, PsbT, PsbX, PsbY, PsbZ, Psb30/Ycf12, peripheral proteins PsbO, CyanoQ (PsbQ), PsbU, PsbV and a large number of cofactors. It forms dimeric complexes. The D1/D2 heterodimer binds P680, chlorophylls that are the primary electron donor of PSII, and subsequent electron acceptors. It shares a non-heme iron and each subunit binds pheophytin, quinone, additional chlorophylls, carotenoids and lipids. D1 provides most of the ligands for the Mn4-Ca-O5 cluster of the oxygen-evolving complex (OEC). There is also a Cl(-1) ion associated with D1 and D2, which is required for oxygen evolution. The PSII complex binds additional chlorophylls, carotenoids and specific lipids. serves as cofactor. Post-translationally, C-terminally processed by CtpA; processing is essential to allow assembly of the oxygen-evolving complex and photosynthetic growth. In terms of processing, tyr-161 forms a radical intermediate that is referred to as redox-active TyrZ, YZ or Y-Z. C-terminally processed by CtpA; processing is essential to allow assembly of the oxygen-evolving complex and thus photosynthetic growth.

Its subcellular location is the cellular thylakoid membrane. It carries out the reaction 2 a plastoquinone + 4 hnu + 2 H2O = 2 a plastoquinol + O2. Its function is as follows. Photosystem II (PSII) is a light-driven water:plastoquinone oxidoreductase that uses light energy to abstract electrons from H(2)O, generating O(2) and a proton gradient subsequently used for ATP formation. It consists of a core antenna complex that captures photons, and an electron transfer chain that converts photonic excitation into a charge separation. The D1/D2 (PsbA/PsbD) reaction center heterodimer binds P680, the primary electron donor of PSII as well as several subsequent electron acceptors. The polypeptide is Photosystem II protein D1 1 (Synechocystis sp. (strain ATCC 27184 / PCC 6803 / Kazusa)).